The primary structure comprises 330 residues: MKTAYIAKQRQISFVKSHFSRQLEEKLGLIEVQAPILSRVGDGTQDNLSGCEKAVQVKVKTLPDAQFEVVHSLAKWKRQTLGQHDFSAGEGLYTHMKALRPDEDRLTPIHSVYVDQWDWERVMGDEERHVGTLKATVEAIYAGIKATELAVSQEFGLKPFLPEQIHFVHSQELLSRYPDLDAKGRERAIAKELGAVFLIGIGGKLSNGKRHDVRAPDYDDWSTEVSEGFAGLNGDILVWNPVLEDAFEISSMGIRVDAEALKRQLAVTGDEDRLQLEWHQALLRGEMPQTIGGGIGQSRLTMLLLQLDHIGQVQCGVWPAQVRESVSALL.

This sequence belongs to the class-II aminoacyl-tRNA synthetase family. AsnA subfamily.

The protein resides in the cytoplasm. The enzyme catalyses L-aspartate + NH4(+) + ATP = L-asparagine + AMP + diphosphate + H(+). The protein operates within amino-acid biosynthesis; L-asparagine biosynthesis; L-asparagine from L-aspartate (ammonia route): step 1/1. This Klebsiella pneumoniae (strain 342) protein is Aspartate--ammonia ligase.